A 1040-amino-acid polypeptide reads, in one-letter code: MIVLLLFALLWMVEGVFSQLHYTVQEEQEHGTFVGNIAEDLGLDITKLSARGFQTVPNSRTPYLDLNLETGVLYVNEKIDREQICKQSPSCVLHLEVFLENPLELFQVEIEVLDINDNPPSFPEPDLTVEISESATPGTRFPLESAFDPDVGTNSLRDYEITPNSYFSLDVQTQGDGNRFAELVLEKPLDREQQAVHRYVLTAVDGGGGGGVGEGGGGGGGAGLPPQQQRTGTALLTIRVLDSNDNVPAFDQPVYTVSLPENSPPGTLVIQLNATDPDEGQNGEVVYSFSSHISPRARELFGLSPRTGRLEVSGELDYEESPVYQVYVQAKDLGPNAVPAHCKVLVRVLDANDNAPEISFSTVKEAVSEGAAPGTVVALFSVTDRDSEENGQVQCELLGDVPFRLKSSFKNYYTIVTEAPLDREAGDSYTLTVVARDRGEPALSTSKSIQVQVSDVNDNAPRFSQPVYDVYVTENNVPGAYIYAVSATDRDEGANAQLAYSILECQIQGMSVFTYVSINSENGYLYALRSFDYEQLKDFSFQVEARDAGSPQALAGNATVNILIVDQNDNAPAIVAPLPGRNGTPAREVLPRSAEPGYLLTRVAAVDADDGENARLTYSIVRGNEMNLFRMDWRTGELRTARRVPAKRDPQRPYELVIEVRDHGQPPLSSTATLVVQLVDGAVEPQGGGGSGGGGSGEHQRPSRSGGGETSLDLTLILIIALGSVSFIFLLAMIVLAVRCQKEKKLNIYTCLASDCCLCCCCCGGGGSTCCGRQARARKKKLSKSDIMLVQSSNVPSNPAQVPIEESGGFGSHHHNQNYCYQVCLTPESAKTDLMFLKPCSPSRSTDTEHNPCGAIVTGYTDQQPDIISNGSILSNETKHQRAELSYLVDRPRRVNSSAFQEADIVSSKDSGHGDSEQGDSDHDATNRAQSAGMDLFSNCTEECKALGHSDRCWMPSFVPSDGRQAADYRSNLHVPGMDSVPDTEVFETPEAQPGAERSFSTFGKEKALHSTLERKELDGLLTNTRAPYKPPYLTRKRIC.

Residues 1-18 (MIVLLLFALLWMVEGVFS) form the signal peptide. Cadherin domains are found at residues 19–122 (QLHY…PPSF), 123–250 (PEPD…VPAF), 251–358 (DQPV…APEI), 359–463 (SFST…APRF), 464–574 (SQPV…APAI), and 582–690 (NGTP…GGGG). Topologically, residues 19–715 (QLHYTVQEEQ…GGGETSLDLT (697 aa)) are extracellular. The span at 207-223 (GGGGGVGEGGGGGGGAG) shows a compositional bias: gly residues. The segment at 207-228 (GGGGGVGEGGGGGGGAGLPPQQ) is disordered. N273 carries an N-linked (GlcNAc...) asparagine glycan. An N-linked (GlcNAc...) asparagine glycan is attached at N557. Over residues 686–697 (QGGGGSGGGGSG) the composition is skewed to gly residues. Residues 686-708 (QGGGGSGGGGSGEHQRPSRSGGG) are disordered. Residues 716–736 (LILIIALGSVSFIFLLAMIVL) traverse the membrane as a helical segment. Over 737 to 1040 (AVRCQKEKKL…PPYLTRKRIC (304 aa)) the chain is Cytoplasmic. The tract at residues 899-927 (AFQEADIVSSKDSGHGDSEQGDSDHDATN) is disordered. A compositionally biased stretch (basic and acidic residues) spans 910 to 926 (DSGHGDSEQGDSDHDAT).

In terms of tissue distribution, moderately expressed in all regions of the brain examined, as well as in testis and ovary, and low expression in all other tissues tested.

It localises to the cell membrane. Potential calcium-dependent cell-adhesion protein. In terms of biological role, (Microbial infection) Acts as a receptor for Western equine encephalitis virus. In Homo sapiens (Human), this protein is Protocadherin-10 (PCDH10).